Here is a 649-residue protein sequence, read N- to C-terminus: Sodium/nucleoside cotransporter 1 (649 aa).

Residues 1-80 (MENDPSRRRE…ARSFCREHMQ (80 aa)) are Cytoplasmic-facing. A helical membrane pass occupies residues 81-104 (LFRWIGTGLLCTGLSAFLLVACLL). The Extracellular portion of the chain corresponds to 105 to 109 (DFQRA). The chain crosses the membrane as a helical span at residues 110–128 (LALFVLTCVVLTFLGHRLL). The Cytoplasmic segment spans residues 129-147 (KRLLGPKLRRFLKPQGHPR). Residues 148 to 167 (LLLWFKRGLALAAFLGLVLW) traverse the membrane as a helical segment. Residues 168-178 (LSLDTSQRPEQ) lie on the Extracellular side of the membrane. Residues 179 to 195 (LVSFAGICVFVALLFAC) traverse the membrane as a helical segment. Topologically, residues 196–201 (SKHHCA) are cytoplasmic. A helical transmembrane segment spans residues 202 to 222 (VSWRAVSWGLGLQFVLGLLVI). The Extracellular portion of the chain corresponds to 223 to 261 (RTEPGFIAFEWLGEQIRIFLSYTKAGSSFVFGEALVKDV). Residues 262–283 (FAFQVLPIIVFFSCVISVLYHV) form a helical membrane-spanning segment. Topologically, residues 284–294 (GLMQWVILKIA) are cytoplasmic. A helical membrane pass occupies residues 295 to 318 (WLMQVTMGTTATETLSVAGNIFVS). Residues 319 to 337 (QTEAPLLIRPYLADMTLSE) are Extracellular-facing. A helical transmembrane segment spans residues 338–360 (VHVVMTGGYATIAGSLLGAYISF). Residues 361-366 (GIDATS) lie on the Cytoplasmic side of the membrane. The helical transmembrane segment at 367-386 (LIAASVMAAPCALALSKLVY) threads the bilayer. Residues 387 to 423 (PEVEESKFRREEGVKLTYGDAQNLIEAASTGAAISVK) lie on the Extracellular side of the membrane. Residues 424-446 (VVANIAANLIAFLAVLDFINAAL) traverse the membrane as a helical segment. Residues 447-457 (SWLGDMVDIQG) are Cytoplasmic-facing. The helical transmembrane segment at 458–479 (LSFQLICSYILRPVAFLMGVAW) threads the bilayer. The Extracellular segment spans residues 480–534 (EDCPVVAELLGIKLFLNEFVAYQDLSKYKQRRLAGAEEWVGDRKQWISVRAEVLT). A helical membrane pass occupies residues 535–558 (TFALCGFANFSSIGIMLGGLTSMV). The Cytoplasmic segment spans residues 559 to 569 (PQRKSDFSQIV). Residues 570 to 592 (LRALFTGACVSLVNACMAGILYM) traverse the membrane as a helical segment. Topologically, residues 593–649 (PRGAEVDCMSLLNTTLSSSSFEIYQCCREAFQSVNPEFSPEALDNCCRFYNHTICAQ) are extracellular. 2 N-linked (GlcNAc...) asparagine glycosylation sites follow: Asn-605 and Asn-643.

It belongs to the concentrative nucleoside transporter (CNT) (TC 2.A.41) family. N-glycosylated. N-glycosylation is required for localization to the plasma membrane and the transporter activity. As to expression, expressed in kidney.

It is found in the cell membrane. The protein resides in the apical cell membrane. The enzyme catalyses uridine(out) + Na(+)(out) = uridine(in) + Na(+)(in). It carries out the reaction thymidine(out) + Na(+)(out) = thymidine(in) + Na(+)(in). It catalyses the reaction cytidine(out) + Na(+)(out) = cytidine(in) + Na(+)(in). The catalysed reaction is adenosine(out) + Na(+)(out) = adenosine(in) + Na(+)(in). With respect to regulation, due to its high apparent affinity but slow transport, adenosine could act as a negative regulator of pyrimidine transport under some conditions. Sodium and pyrimidine nucleoside symporter of the plasma membrane that imports uridine, thymidine and cytidine into cells by coupling their transport to the transmembrane sodium electrochemical gradient. Also transports adenosine, an atypical substrate transported with high apparent affinity, but low maximum velocity. Therefore, exhibits the transport characteristics of the nucleoside transport system cit or N2 subtype (N2/cit). Involved in renal nucleoside (re)absorption. The chain is Sodium/nucleoside cotransporter 1 from Homo sapiens (Human).